Here is a 75-residue protein sequence, read N- to C-terminus: Dermaseptin-S11 (75 aa).

Residues Met-1 to Cys-22 form the signal peptide. Residues Glu-23 to Arg-45 constitute a propeptide that is removed on maturation. The segment at Glu-25–Lys-44 is disordered. Residues Glu-30–Ser-41 are compositionally biased toward acidic residues.

This sequence belongs to the frog skin active peptide (FSAP) family. Dermaseptin subfamily. As to expression, expressed by the skin glands.

It localises to the secreted. The protein resides in the target cell membrane. Functionally, antimicrobial peptide with activity against Gram-positive and Gram-negative bacteria, and fungi. Has hemolytic activity. This chain is Dermaseptin-S11, found in Phyllomedusa sauvagei (Sauvage's leaf frog).